The following is a 770-amino-acid chain: Glutamate carboxypeptidase 2 homolog (770 aa).

The Cytoplasmic portion of the chain corresponds to 1-19 (MPYVGVGAQKASTNLTGGP). The helical; Signal-anchor for type II membrane protein transmembrane segment at 20–40 (MMKAYAFVLAFFLLGLGVLAL) threads the bilayer. Topologically, residues 41–770 (GKHHSGRRFN…CVVNTLRDVI (730 aa)) are extracellular. N-linked (GlcNAc...) asparagine glycans are attached at residues N175 and N337. Residues 282-597 (SKKELFKGRT…QYWAELAKTF (316 aa)) form a catalytic region. Residues H387 and D397 each coordinate Zn(2+). N417 carries N-linked (GlcNAc...) asparagine glycosylation. E435 functions as the Nucleophile in the catalytic mechanism. Residues E436 and D464 each coordinate Zn(2+). N-linked (GlcNAc...) asparagine glycans are attached at residues N469 and N551. H562 provides a ligand contact to Zn(2+). N-linked (GlcNAc...) asparagine glycosylation is found at N606 and N630.

Belongs to the peptidase M28 family. M28B subfamily. Requires Zn(2+) as cofactor.

The protein resides in the membrane. It carries out the reaction Release of an unsubstituted, C-terminal glutamyl residue, typically from Ac-Asp-Glu or folylpoly-gamma-glutamates.. The sequence is that of Glutamate carboxypeptidase 2 homolog from Caenorhabditis briggsae.